The following is a 356-amino-acid chain: 1-acyl-sn-glycerol-3-phosphate acyltransferase LPAT1, chloroplastic (356 aa).

A chloroplast-targeting transit peptide spans 1 to 56 (MDVASARSISSHPSYYGKPICSSQSSLIRISRDKVCCFGRISNGMTSFTTSLHAVP). Residues 127–147 (GIFFCVVAGISATFLIVLMII) form a helical membrane-spanning segment. The HXXXXD motif motif lies at 202–207 (HQSFLD). A helical membrane pass occupies residues 224 to 244 (TGIFVIPIIGWAMSMMGVVPL).

Belongs to the 1-acyl-sn-glycerol-3-phosphate acyltransferase family. As to expression, widely expressed. Expressed at higher level in leaves. Expressed at lower level in silique walls compared to leaves.

It localises to the plastid. The protein localises to the chloroplast membrane. The enzyme catalyses a fatty acyl-[ACP] + a 1-acyl-sn-glycero-3-phosphate = a 1,2-diacyl-sn-glycero-3-phosphate + holo-[ACP]. It carries out the reaction a 1-acyl-sn-glycero-3-phosphate + an acyl-CoA = a 1,2-diacyl-sn-glycero-3-phosphate + CoA. The protein operates within phospholipid metabolism; CDP-diacylglycerol biosynthesis; CDP-diacylglycerol from sn-glycerol 3-phosphate: step 2/3. Its function is as follows. Plastidial enzyme of the prokaryotic glycerol-3-phosphate pathway that converts lysophosphatidic acid (LPA) into phosphatidic acid by incorporating an acyl moiety at position sn-2. Utilizes palmitoyl-ACP (16:0-ACP) to produce phosphatidic acid containing a saturated group at position sn-2, which is characteristic of lipids synthesized by the prokaryotic pathway. In vitro, can use 16:0-CoA as acyl donor. Essential for embryo development during the transition from the globular to the heart stage when chloroplasts begin to form. The protein is 1-acyl-sn-glycerol-3-phosphate acyltransferase LPAT1, chloroplastic of Arabidopsis thaliana (Mouse-ear cress).